Consider the following 1609-residue polypeptide: Probable outer membrane protein pmp21 (1609 aa).

An N-terminal signal peptide occupies residues 1–30 (MVAKKTVRSYRSSFSHSVIVAILSAGIAFE). Over residues 132–145 (FSQPTQEPDTSNAV) the composition is skewed to polar residues. 2 disordered regions span residues 132–183 (FSQP…KSPE) and 640–677 (TAPV…EVPP). 2 stretches are compositionally biased toward basic and acidic residues: residues 149-175 (ISSD…KEVS) and 651-672 (NKDE…KTVE). Positions 1328 to 1609 (ELDFSTNVWG…DFNGGIRIIF (282 aa)) constitute an Autotransporter domain.

Belongs to the PMP outer membrane protein family.

It is found in the secreted. The protein localises to the cell wall. It localises to the cell outer membrane. This chain is Probable outer membrane protein pmp21 (pmp21), found in Chlamydia pneumoniae (Chlamydophila pneumoniae).